Here is an 88-residue protein sequence, read N- to C-terminus: UPF0367 protein syc2447_c (88 aa).

It belongs to the UPF0367 family.

This Synechococcus sp. (strain ATCC 27144 / PCC 6301 / SAUG 1402/1) (Anacystis nidulans) protein is UPF0367 protein syc2447_c.